The following is a 111-amino-acid chain: UPF0122 protein YofM (111 aa).

It belongs to the UPF0122 family.

Might take part in the signal recognition particle (SRP) pathway. This is inferred from the conservation of its genetic proximity to ftsY/ffh. May be a regulatory protein. The sequence is that of UPF0122 protein YofM (yofM) from Lactococcus lactis subsp. lactis (strain IL1403) (Streptococcus lactis).